The primary structure comprises 749 residues: MGTVVGETELNRLNNGLSSNNGSSADEGLEHWNPLKKIHSADSSRRRSTSSQLNQPSNYHMHSSLHEEVSVGSSIASPSSRIPDKAISQYYETSPPSSTSSLSSNNQLMNSSVILSPGQFLPDDANAYGPKASLPPSEMPSHFHPLWSKSASKDSNAFNDPSAIPNPSPLFSSAYATRINGSLRNDKWNRSSFSEALSSSRFSRPQVGQQQPLSSAFPFQPVKQPTEQPGSLHPFMQESKTSPFATRRPSLNTDHHGRPILLSPLNYQNSSLNPSTPSPFGGSPVMHPPVSNLSPRTPAVPMSSDGHLAPAFDFLNENPIWSKRFSISSIKYSAPSTSNASNIAPDSAPPASSQFSVPFNAAAENINDTPDSVLANSPTPRHLPYTWSRHSTSGPSRSTVLNPSTSRMSNYTGLESHLAQLSFKRRSNSATLPSLGSIRPFPISEHSPNINPLDEAAVEDEVKEEKSRFHLGHRRSSTADNGTLSSNVPLYPAYNSSPVQTRTSLFSSRLSKPSNPIVSSVSQANAPKNALHSMPSPTSLANLPSNLSDTQYKKLYNLYLVEFKAGRADVFYIDDNIKLSLNLNDYVVVDADRGQDLGRLIAQNLSQSEVASHIEKIPSDRNGQLQNLDGAILEGDTSQSLHPKRILRKAQPHEVDQLIQKTQDEAQALLVCQAKVRQRKLPMEVLDGEYQWDRKKLTFYYHAKQRIDFRELVRDLFKVYKTRIWMCAVSGTNMSSPASINASTNQFVL.

4 disordered regions span residues 1–58 (MGTV…QPSN), 124–170 (DANA…PSPL), 200–291 (SRFS…PPVS), and 385–405 (YTWS…NPST). Over residues 13–24 (LNNGLSSNNGSS) the composition is skewed to low complexity. Composition is skewed to polar residues over residues 149–159 (KSASKDSNAFN), 238–252 (ESKT…PSLN), 265–275 (LNYQNSSLNPS), and 388–405 (SRHS…NPST). The PSP1 C-terminal domain occupies 644–729 (KRILRKAQPH…YKTRIWMCAV (86 aa)).

This is an uncharacterized protein from Schizosaccharomyces pombe (strain 972 / ATCC 24843) (Fission yeast).